A 457-amino-acid chain; its full sequence is UDP-N-acetylmuramate--L-alanine ligase (457 aa).

ATP is bound at residue 117-123; it reads GTHGKTT.

Belongs to the MurCDEF family.

The protein resides in the cytoplasm. It catalyses the reaction UDP-N-acetyl-alpha-D-muramate + L-alanine + ATP = UDP-N-acetyl-alpha-D-muramoyl-L-alanine + ADP + phosphate + H(+). It functions in the pathway cell wall biogenesis; peptidoglycan biosynthesis. Cell wall formation. The sequence is that of UDP-N-acetylmuramate--L-alanine ligase from Clostridium kluyveri (strain NBRC 12016).